Reading from the N-terminus, the 66-residue chain is uncharacterized protein (66 aa).

This is an uncharacterized protein from Vertebrata (FPV).